We begin with the raw amino-acid sequence, 168 residues long: Large ribosomal subunit protein uL10 (168 aa).

This sequence belongs to the universal ribosomal protein uL10 family. As to quaternary structure, part of the ribosomal stalk of the 50S ribosomal subunit. The N-terminus interacts with L11 and the large rRNA to form the base of the stalk. The C-terminus forms an elongated spine to which L12 dimers bind in a sequential fashion forming a multimeric L10(L12)X complex.

Forms part of the ribosomal stalk, playing a central role in the interaction of the ribosome with GTP-bound translation factors. This Paracidovorax citrulli (strain AAC00-1) (Acidovorax citrulli) protein is Large ribosomal subunit protein uL10.